Here is a 1368-residue protein sequence, read N- to C-terminus: DNA-directed RNA polymerase subunit beta (1368 aa).

The protein belongs to the RNA polymerase beta chain family. The RNAP catalytic core consists of 2 alpha, 1 beta, 1 beta' and 1 omega subunit. When a sigma factor is associated with the core the holoenzyme is formed, which can initiate transcription.

It carries out the reaction RNA(n) + a ribonucleoside 5'-triphosphate = RNA(n+1) + diphosphate. Its function is as follows. DNA-dependent RNA polymerase catalyzes the transcription of DNA into RNA using the four ribonucleoside triphosphates as substrates. The chain is DNA-directed RNA polymerase subunit beta from Cupriavidus necator (strain ATCC 17699 / DSM 428 / KCTC 22496 / NCIMB 10442 / H16 / Stanier 337) (Ralstonia eutropha).